Here is a 535-residue protein sequence, read N- to C-terminus: NEDD8-activating enzyme E1 regulatory subunit (535 aa).

An interaction with UBA3 region spans residues 332 to 345 (DMIADSSKFIKLQN).

It belongs to the ubiquitin-activating E1 family. ULA1 subfamily. Heterodimer of UBA3 and NAE1. The complex binds NEDD8 and UBE2M.

Its pathway is protein modification; protein neddylation. Its function is as follows. Regulatory subunit of the dimeric UBA3-NAE1 E1 enzyme. E1 activates NEDD8 by first adenylating its C-terminal glycine residue with ATP, thereafter linking this residue to the side chain of the catalytic cysteine, yielding a NEDD8-UBA3 thioester and free AMP. E1 finally transfers NEDD8 to the catalytic cysteine of UBE2M. The covalent attachment of NEDD8 to target proteins is known as 'neddylation' and the process is involved in the regulation of cell growth, viability and development. This chain is NEDD8-activating enzyme E1 regulatory subunit (NAE1), found in Gallus gallus (Chicken).